A 52-amino-acid polypeptide reads, in one-letter code: Insulin (52 aa).

3 disulfides stabilise this stretch: Cys-7–Cys-38, Cys-19–Cys-51, and Cys-37–Cys-42.

The protein belongs to the insulin family. As to quaternary structure, heterodimer of a B chain and an A chain linked by two disulfide bonds.

The protein localises to the secreted. Insulin decreases blood glucose concentration. It increases cell permeability to monosaccharides, amino acids and fatty acids. It accelerates glycolysis, the pentose phosphate cycle, and glycogen synthesis in liver. The polypeptide is Insulin (ins) (Amia calva (Bowfin)).